A 338-amino-acid chain; its full sequence is D-xylulose reductase (338 aa).

Zn(2+)-binding residues include cysteine 40, histidine 65, and glutamate 151.

It belongs to the zinc-containing alcohol dehydrogenase family. Homotetramer. Zn(2+) is required as a cofactor.

It catalyses the reaction xylitol + NAD(+) = D-xylulose + NADH + H(+). The polypeptide is D-xylulose reductase (Morganella morganii (Proteus morganii)).